Consider the following 126-residue polypeptide: Acidic phospholipase A2 S1E6-a (126 aa).

The signal sequence occupies residues 1-3 (VEG). Cystine bridges form between Cys29–Cys119, Cys31–Cys47, Cys46–Cys98, Cys52–Cys126, Cys53–Cys91, Cys60–Cys84, and Cys78–Cys89. Tyr30, Gly32, and Gly34 together coordinate Ca(2+). His50 is a catalytic residue. Position 51 (Asp51) interacts with Ca(2+). Asp92 is a catalytic residue.

Homodimer. Requires Ca(2+) as cofactor. As to expression, expressed by the venom gland.

Its subcellular location is the secreted. The catalysed reaction is a 1,2-diacyl-sn-glycero-3-phosphocholine + H2O = a 1-acyl-sn-glycero-3-phosphocholine + a fatty acid + H(+). Functionally, snake venom phospholipase A2 (PLA2) that inhibits ADP-induced platelet aggregation. PLA2 catalyzes the calcium-dependent hydrolysis of the 2-acyl groups in 3-sn-phosphoglycerides. This is Acidic phospholipase A2 S1E6-a from Calloselasma rhodostoma (Malayan pit viper).